Here is a 1608-residue protein sequence, read N- to C-terminus: Hemolysin (1608 aa).

Positions 1-30 are cleaved as a signal peptide; it reads MKNNNFRLSAAGKLAAALAIILAASAGAYA. 6 disordered regions span residues 296-315, 452-488, 716-737, 971-1030, 1168-1199, and 1437-1469; these read SRVD…QNYR, KSSE…LRSE, EHTR…LSGG, AVNL…SASQ, AEST…TGGN, and PQQD…QGPL. 2 stretches are compositionally biased toward polar residues: residues 303–313 and 460–474; these read SNKNGGDNYQN and RNHT…WSNS. 2 stretches are compositionally biased toward basic and acidic residues: residues 478–488 and 716–726; these read ESLKASELRSE and EHTRDSEKTTR. A compositionally biased stretch (polar residues) spans 727-736; that stretch reads TENSASSLSG. Positions 977 to 996 are enriched in basic and acidic residues; that stretch reads DSHRSEAAANRQDEQSRDTR. Over residues 1021–1030 the composition is skewed to polar residues; the sequence is TQRSNSSASQ.

The protein localises to the cell outer membrane. Bacterial hemolysins are exotoxins that attack blood cell membranes and cause cell rupture by mechanisms not clearly defined. Its function is as follows. Cell-bound hemolysin, which releases heme-iron from erythrocytes by interaction with the erythrocyte membrane. ShlA requires ShlB function. The chain is Hemolysin (shlA) from Serratia marcescens.